A 246-amino-acid polypeptide reads, in one-letter code: Probable transcriptional regulatory protein CA_C2295 (246 aa).

The protein belongs to the TACO1 family.

It localises to the cytoplasm. This is Probable transcriptional regulatory protein CA_C2295 from Clostridium acetobutylicum (strain ATCC 824 / DSM 792 / JCM 1419 / IAM 19013 / LMG 5710 / NBRC 13948 / NRRL B-527 / VKM B-1787 / 2291 / W).